A 180-amino-acid chain; its full sequence is UPF0227 protein YcfP (180 aa).

It belongs to the UPF0227 family.

This is UPF0227 protein YcfP from Salmonella arizonae (strain ATCC BAA-731 / CDC346-86 / RSK2980).